A 1218-amino-acid chain; its full sequence is Protein jagged-1 (1218 aa).

Residues 1 to 33 form the signal peptide; that stretch reads MRSPRTRGRPGRPLSLLLALLCALRAKVCGASG. The Extracellular segment spans residues 34–1067; the sequence is QFELEILSMQ…QRRPLKNRTD (1034 aa). A glycan (N-linked (GlcNAc...) asparagine) is linked at Asn143. Residues 185–229 form the DSL domain; it reads VTCDDHYYGFGCNKFCRPRDDFFGHYACDQNGNKTCMEGWMGPDC. 2 disulfides stabilise this stretch: Cys187/Cys196 and Cys200/Cys212. Positions 199-207 are important for interaction with NOTCH1; it reads FCRPRDDFF. Residue Asn217 is glycosylated (N-linked (GlcNAc...) asparagine). Cystine bridges form between Cys220–Cys229, Cys234–Cys245, Cys238–Cys251, Cys253–Cys262, Cys265–Cys276, Cys271–Cys282, Cys284–Cys293, Cys300–Cys312, Cys306–Cys322, Cys324–Cys333, Cys340–Cys351, Cys345–Cys360, Cys362–Cys371, Cys378–Cys389, Cys383–Cys398, Cys400–Cys409, Cys416–Cys427, Cys421–Cys436, Cys438–Cys447, Cys454–Cys464, Cys458–Cys473, Cys475–Cys484, Cys491–Cys502, Cys496–Cys511, Cys513–Cys522, Cys529–Cys540, Cys534–Cys549, Cys551–Cys560, Cys578–Cys605, Cys599–Cys615, Cys617–Cys626, Cys633–Cys644, Cys638–Cys653, Cys655–Cys664, Cys671–Cys682, Cys676–Cys691, Cys693–Cys702, Cys709–Cys720, Cys714–Cys729, and Cys731–Cys740. In terms of domain architecture, EGF-like 1 spans 230 to 263; it reads NKAICRQGCSPKHGSCKLPGDCRCQYGWQGLYCD. The region spanning 264 to 294 is the EGF-like 2; atypical domain; it reads KCIPHPGCVHGTCNEPWQCLCETNWGGQLCD. EGF-like domains follow at residues 296–334 and 336–372; these read DLNY…PNCE and AEHA…PTCS. The region spanning 374–410 is the EGF-like 5; calcium-binding domain; the sequence is NIDDCSPNNCSHGGTCQDLVNGFKCVCPPQWTGKTCQ. Asn382 carries an N-linked (GlcNAc...) asparagine glycan. The EGF-like 6; calcium-binding domain maps to 412–448; that stretch reads DANECEAKPCVNARSCKNLIASYYCDCLPGWMGQNCD. The region spanning 450–485 is the EGF-like 7; calcium-binding domain; the sequence is NINDCLGQCQNDASCRDLVNGYRCICPPGYAGDHCE. In terms of domain architecture, EGF-like 8; calcium-binding spans 487-523; it reads DIDECASNPCLNGGHCQNEINRFQCLCPTGFSGNLCQ. 2 EGF-like domains span residues 525-561 and 586-627; these read DIDY…KNCS and DTPE…TYCH. N-linked (GlcNAc...) asparagine glycosylation is present at Asn559. Positions 629–665 constitute an EGF-like 11; calcium-binding domain; that stretch reads NINDCESNPCKNGGTCIDGVNSYKCICSDGWEGAHCE. An EGF-like 12; calcium-binding domain is found at 667 to 703; the sequence is NINDCSQNPCHYGGTCRDLVNDFYCDCKNGWKGKTCH. EGF-like domains are found at residues 705–741 and 744–780; these read RDSQ…TTCN and RNSS…PICT. An N-linked (GlcNAc...) asparagine glycan is attached at Asn745. 9 disulfides stabilise this stretch: Cys748–Cys759, Cys753–Cys768, Cys770–Cys779, Cys786–Cys797, Cys791–Cys806, Cys808–Cys817, Cys824–Cys835, Cys829–Cys844, and Cys846–Cys855. The EGF-like 15; calcium-binding domain maps to 782–818; that stretch reads NTNDCSPHPCYNSGTCVDGDNWYRCECAPGFAGPDCR. The EGF-like 16; calcium-binding domain occupies 820-856; it reads NINECQSSPCAFGATCVDEINGYQCICPPGHSGAKCH. N-linked (GlcNAc...) asparagine glycans are attached at residues Asn960, Asn991, Asn1045, and Asn1064. Residues 1068 to 1093 traverse the membrane as a helical segment; sequence FLVPLLSSVLTVAWVCCLVTAFYWCV. Residues 1094–1218 lie on the Cytoplasmic side of the membrane; that stretch reads RKRRKPSSHT…QSLNRMEYIV (125 aa). The tract at residues 1181–1218 is disordered; that stretch reads REEKAPSGTPTKHPNWTNKQDNRDLESAQSLNRMEYIV. Positions 1188–1199 are enriched in polar residues; that stretch reads GTPTKHPNWTNK.

As to quaternary structure, interacts with NOTCH1, NOTCH2 and NOTCH3. Widely expressed in many tissues, with highest expression in brain, heart, muscle and thymus.

The protein localises to the membrane. It is found in the cell membrane. In terms of biological role, ligand for multiple Notch receptors and involved in the mediation of Notch signaling. May be involved in cell-fate decisions during hematopoiesis. Seems to be involved in early and late stages of mammalian cardiovascular development. Inhibits myoblast differentiation. May regulate fibroblast growth factor-induced angiogenesis. The chain is Protein jagged-1 (Jag1) from Mus musculus (Mouse).